We begin with the raw amino-acid sequence, 444 residues long: Xylose isomerase (444 aa).

Mg(2+) is bound by residues D307 and D309.

It belongs to the xylose isomerase family. In terms of assembly, homotetramer. The cofactor is Mg(2+).

It is found in the cytoplasm. The catalysed reaction is alpha-D-xylose = alpha-D-xylulofuranose. The chain is Xylose isomerase from Thermotoga neapolitana (strain ATCC 49049 / DSM 4359 / NBRC 107923 / NS-E).